Consider the following 626-residue polypeptide: Chaperone protein HtpG (626 aa).

An a; substrate-binding region spans residues 1–339 (MSQNQETRGF…SNDLPLNVSR (339 aa)). Residues 340–555 (EILQDNKITA…NDQMTTQMAK (216 aa)) form a b region. The c stretch occupies residues 556–626 (LFAAAGQPVP…FIKRINKLLG (71 aa)).

This sequence belongs to the heat shock protein 90 family. As to quaternary structure, homodimer.

Its subcellular location is the cytoplasm. Its function is as follows. Molecular chaperone. Has ATPase activity. The polypeptide is Chaperone protein HtpG (Haemophilus influenzae (strain PittGG)).